Consider the following 446-residue polypeptide: Adenylosuccinate synthetase (446 aa).

GTP contacts are provided by residues 20–26 and 48–50; these read GDEGKGK and GHT. The active-site Proton acceptor is aspartate 21. The Mg(2+) site is built by aspartate 21 and glycine 48. IMP-binding positions include 21–24, 46–49, threonine 137, arginine 151, glutamine 232, threonine 247, and arginine 319; these read DEGK and NAGH. Residue histidine 49 is the Proton donor of the active site. 315–321 serves as a coordination point for substrate; it reads SVTGRPR. Residues arginine 321, 347 to 349, and 429 to 431 contribute to the GTP site; these read KLD and STG.

Belongs to the adenylosuccinate synthetase family. Homodimer. Mg(2+) serves as cofactor.

The protein localises to the cytoplasm. The catalysed reaction is IMP + L-aspartate + GTP = N(6)-(1,2-dicarboxyethyl)-AMP + GDP + phosphate + 2 H(+). The protein operates within purine metabolism; AMP biosynthesis via de novo pathway; AMP from IMP: step 1/2. Its function is as follows. Plays an important role in the de novo pathway of purine nucleotide biosynthesis. Catalyzes the first committed step in the biosynthesis of AMP from IMP. The polypeptide is Adenylosuccinate synthetase (Ralstonia nicotianae (strain ATCC BAA-1114 / GMI1000) (Ralstonia solanacearum)).